We begin with the raw amino-acid sequence, 107 residues long: UPF0145 protein YbjQ (107 aa).

Belongs to the UPF0145 family.

The protein is UPF0145 protein YbjQ of Salmonella gallinarum (strain 287/91 / NCTC 13346).